A 386-amino-acid polypeptide reads, in one-letter code: Bifunctional enzyme IspD/IspF (386 aa).

The interval 1 to 226 (MATPSPLPSF…EDFMADLLPV (226 aa)) is 2-C-methyl-D-erythritol 4-phosphate cytidylyltransferase. The segment at 227–386 (RVGTGFDVHK…ATVVRKDTPA (160 aa)) is 2-C-methyl-D-erythritol 2,4-cyclodiphosphate synthase. Residues Asp-233 and His-235 each contribute to the a divalent metal cation site. Residues 233–235 (DVH) and 259–260 (HS) contribute to the 4-CDP-2-C-methyl-D-erythritol 2-phosphate site. A divalent metal cation is bound at residue His-267. 4-CDP-2-C-methyl-D-erythritol 2-phosphate contacts are provided by residues 281–283 (DIG), 357–360 (TTTE), Phe-364, and Arg-367.

It in the N-terminal section; belongs to the IspD/TarI cytidylyltransferase family. IspD subfamily. This sequence in the C-terminal section; belongs to the IspF family. A divalent metal cation serves as cofactor.

The catalysed reaction is 2-C-methyl-D-erythritol 4-phosphate + CTP + H(+) = 4-CDP-2-C-methyl-D-erythritol + diphosphate. It carries out the reaction 4-CDP-2-C-methyl-D-erythritol 2-phosphate = 2-C-methyl-D-erythritol 2,4-cyclic diphosphate + CMP. The protein operates within isoprenoid biosynthesis; isopentenyl diphosphate biosynthesis via DXP pathway; isopentenyl diphosphate from 1-deoxy-D-xylulose 5-phosphate: step 2/6. It functions in the pathway isoprenoid biosynthesis; isopentenyl diphosphate biosynthesis via DXP pathway; isopentenyl diphosphate from 1-deoxy-D-xylulose 5-phosphate: step 4/6. Bifunctional enzyme that catalyzes the formation of 4-diphosphocytidyl-2-C-methyl-D-erythritol from CTP and 2-C-methyl-D-erythritol 4-phosphate (MEP) (IspD), and catalyzes the conversion of 4-diphosphocytidyl-2-C-methyl-D-erythritol 2-phosphate (CDP-ME2P) to 2-C-methyl-D-erythritol 2,4-cyclodiphosphate (ME-CPP) with a corresponding release of cytidine 5-monophosphate (CMP) (IspF). The protein is Bifunctional enzyme IspD/IspF of Erythrobacter litoralis (strain HTCC2594).